The sequence spans 226 residues: Phospholipase Culp4 (226 aa).

The signal sequence occupies residues 1 to 45; sequence MIPRPQPHSGRWRAGAARRLTSLVAAAFAAATLLLTPALAPPASA. C47 and C117 are disulfide-bonded. S128 functions as the Nucleophile in the catalytic mechanism. A disulfide bridge connects residues C191 and C198. Residue D195 is part of the active site. The Proton donor/acceptor role is filled by H207.

Belongs to the cutinase family. As to quaternary structure, homodimer.

It localises to the cell membrane. The protein localises to the secreted. It is found in the cell wall. It catalyses the reaction 1,2-dihexadecanoyl-sn-glycero-3-phosphocholine + H2O = 1-hexadecanoyl-sn-glycero-3-phosphocholine + hexadecanoate + H(+). The catalysed reaction is a butanoate ester + H2O = an aliphatic alcohol + butanoate + H(+). Inhibited by high concentrations of paraoxon. Inhibited by tetrahydrolipstatin (THL), a specific lipase inhibitor. Its function is as follows. A2-type phospholipase, which is probably involved in the degradation of macrophage membrane. Hydrolyzes dipalmitoylphosphatidylcholine. Also shows moderate esterase activity and hydrolyzes the p-nitrophenol-linked aliphatic ester pNP-butyrate (C4). Does not exhibit cutinase activity. This Mycobacterium tuberculosis (strain ATCC 25618 / H37Rv) protein is Phospholipase Culp4.